The chain runs to 167 residues: MKIRGLDQFIQSLDRASRGGLKRKYEQWLESMGFEFLDIIQDEIIRTKTVDTRRLLNSFQKGDQDNIFSMTEGSLKLDVGTNLDYASYVNDGHFTIDPSKNQDRRWVPGRWKGDRFEYDPAEKNSGMLLKFRWVDGSGFWDNAMAIFQLMFERSLERKLQQWIYEEF.

To B.subtilis XkdI.

This is an uncharacterized protein from Bacillus subtilis (strain 168).